Consider the following 125-residue polypeptide: Small ribosomal subunit protein eS8 (125 aa).

The protein belongs to the eukaryotic ribosomal protein eS8 family. As to quaternary structure, part of the 30S ribosomal subunit.

In Methanosarcina acetivorans (strain ATCC 35395 / DSM 2834 / JCM 12185 / C2A), this protein is Small ribosomal subunit protein eS8.